The chain runs to 714 residues: MDMTSAFTLNVRLDHIAVVTIDVPGEKMNTLKAEFAAQVRAILKEIRENKEIRGVVFISAKADNFIAGADINMIDHCNTAMEAETLARQGQQLMAEIHALPVPVIAAIHGACLGGGLELALACHGRICTDDPKTILGLPEVQLGLLPGSGGTQRLPRLVGLSTALDMILTGKQLRPGQALKSGLVDEIVPQSILLQAAVERAKQERQTPRSLPVRERILAGPLGRSLLFRFVSKKTDQKTQGNYPATTRILDVIETGLSQGSSSGYDAEARAFGELAMTSQSQSLRNIFFASTEVKKDPGSTVQPGTLDSIGILGGGLMGGGIAFVTACKAGLPVRIKDINPQGINHALKYSWQLLDAKVRRRHIKAGEQARQLAKISGTTDYQGFAHRDVVIEAVFEDLSLKQQMVAEVEKNCGLHTIFASNTSSIPISDIAAHATRPEQVIGLHFFSPVEKMPLVEVIPHAATSEKTIATIVKLAKKQGKTPIVVQDKAGFYVNRILAPYINEAIRLLTEGEKVETIDTALVKFGFPVGPIQLLDEVGIDTGTKIIPVLEAAYGERFSAPANVVSSILNDDRKGRKNGRGFYLYGAKGRKSKKQVDPEIYKIIAVQGQSKLSAQQITERCVMLMLNEAARCYREGVIRHARDGDIGAVFGIGFPPFLGGPFRYMDSLGASEVVAVLQRLTSLYGSRFTPCEQLLQMAERGESFWKTSATDRH.

Residues 1 to 190 are enoyl-CoA hydratase; it reads MDMTSAFTLN…KSGLVDEIVP (190 aa). The interval 306-714 is 3-hydroxyacyl-CoA dehydrogenase; sequence GTLDSIGILG…FWKTSATDRH (409 aa).

The protein in the N-terminal section; belongs to the enoyl-CoA hydratase/isomerase family. It in the central section; belongs to the 3-hydroxyacyl-CoA dehydrogenase family. Heterotetramer of two alpha chains (FadJ) and two beta chains (FadI).

It is found in the cytoplasm. The enzyme catalyses a (3S)-3-hydroxyacyl-CoA = a (2E)-enoyl-CoA + H2O. It catalyses the reaction a 4-saturated-(3S)-3-hydroxyacyl-CoA = a (3E)-enoyl-CoA + H2O. The catalysed reaction is a (3S)-3-hydroxyacyl-CoA + NAD(+) = a 3-oxoacyl-CoA + NADH + H(+). It carries out the reaction (3S)-3-hydroxybutanoyl-CoA = (3R)-3-hydroxybutanoyl-CoA. It participates in lipid metabolism; fatty acid beta-oxidation. Its function is as follows. Catalyzes the formation of a hydroxyacyl-CoA by addition of water on enoyl-CoA. Also exhibits 3-hydroxyacyl-CoA epimerase and 3-hydroxyacyl-CoA dehydrogenase activities. This chain is Fatty acid oxidation complex subunit alpha, found in Escherichia fergusonii (strain ATCC 35469 / DSM 13698 / CCUG 18766 / IAM 14443 / JCM 21226 / LMG 7866 / NBRC 102419 / NCTC 12128 / CDC 0568-73).